The primary structure comprises 598 residues: Fumarate reductase flavoprotein subunit (598 aa).

FAD is bound by residues 12-16 (GAGGA), 36-38 (ISK), 44-52 (SHTVAAEGG), 156-158 (HFV), and aspartate 212. A Tele-8alpha-FAD histidine modification is found at histidine 45. Residues histidine 233 and arginine 249 contribute to the active site. FAD-binding positions include 356 to 357 (HY), glutamate 380, and 391 to 397 (RLGSNSL). The segment at 577–598 (AKRVYGGEATAQDKQNKEKANG) is disordered.

Belongs to the FAD-dependent oxidoreductase 2 family. FRD/SDH subfamily. In terms of assembly, part of an enzyme complex containing four subunits: a flavoprotein (FrdA), an iron-sulfur protein (FrdB), and two hydrophobic anchor proteins (FrdC and FrdD). Requires FAD as cofactor.

Its subcellular location is the cell inner membrane. It catalyses the reaction a quinone + succinate = fumarate + a quinol. The enzyme catalyses a menaquinone + succinate = a menaquinol + fumarate. Its function is as follows. Two distinct, membrane-bound, FAD-containing enzymes are responsible for the catalysis of fumarate and succinate interconversion; the fumarate reductase is used in anaerobic growth, and the succinate dehydrogenase is used in aerobic growth. The sequence is that of Fumarate reductase flavoprotein subunit (frdA) from Proteus vulgaris.